The chain runs to 265 residues: MIKWPWKVQESAHQTALPWQEALSIPLLTCLTEQEQSKLVTLAERFLQQKRLVPLQGFELDSLRSCRIALLFCLPVLELGLEWLDGFHEVLIYPAPFVVDDEWEDDIGLVHNQRIVQSGQSWQQGPIVLNWLDIQDSFDASGFNLIIHEVAHKLDTRNGDRASGVPFIPLREVAGWEHDLHAAMNNIQEEIELVGENAASIDAYAASDPAECFAVLSEYFFSAPELFAPRFPSLWQRFCQFYQQDPLQRLHHANDTDSFSATNVH.

Zn(2+)-binding residues include His111, His148, His152, and Glu211.

Belongs to the MtfA family. Interacts with Mlc with high affinity. It depends on Zn(2+) as a cofactor.

Its subcellular location is the cytoplasm. Proteolytic activity is stimulated by interaction with Mlc. Addition of the chelators EDTA or phenanthroline significantly reduces the peptidase activity, whereas the addition of other protease inhibitors has much less effect. In terms of biological role, involved in the modulation of the activity of the glucose-phosphotransferase system (glucose-PTS). Interacts with the transcriptional repressor Mlc, preventing its interaction with DNA and leading to the modulation of expression of genes regulated by Mlc, including ptsG, which encodes the PTS system glucose-specific EIICB component. Its function is as follows. Shows zinc-dependent metallopeptidase activity. In vitro, can cleave several artificial substrates. The greatest activity and specificity is observed for L-alanine fused to 4-nitroanilide (L-alanine-pNA). Shows significantly lower activity towards L-arginine-pNA, L-proline-pNA, hippuryl-L-phenylalanine and hippuryl-L-arginine, and cannot use FTC-casein. Mlc does not appear to be a biologically relevant peptidase substrate. Biologically relevant targets may have a function in growth transition under changing environmental conditions. The polypeptide is Mlc titration factor A (Escherichia coli (strain K12)).